The primary structure comprises 91 residues: Large ribosomal subunit protein bL27 (91 aa).

It belongs to the bacterial ribosomal protein bL27 family.

This Pseudomonas savastanoi pv. phaseolicola (strain 1448A / Race 6) (Pseudomonas syringae pv. phaseolicola (strain 1448A / Race 6)) protein is Large ribosomal subunit protein bL27.